A 456-amino-acid polypeptide reads, in one-letter code: MNSQITNAKTREWQALSRDHHLPPFTDYKQLNEKGARIITKAEGVYIWDSEGNKILDAMAGLWCVNVGYGREELVQAATRQMRELPFYNLFFQTAHPPVVELAKAIADVAPEGMNHVFFTGSGSEANDTVLRMVRHYWATKGQPQKKVVIGRWNGYHGSTVAGVSLGGMKALHEQGDFPIPGIVHIAQPYWYGEGGDMSPDEFGVWAAEQLEKKILEVGEENVAAFIAEPIQGAGGVIVPPDTYWPKIREILAKYDILFIADEVICGFGRTGEWFGSQYYGNAPDLMPIAKGLTSGYIPMGGVVVRDEIVEVLNQGGEFYHGFTYSGHPVAAAVALENIRILREEKIIEKVKAETAPYLQKRWQELADHPLVGEARGVGMVAALELVKNKKTRERFTDKGVGMLCREHCFRNGLIMRAVGDTMIISPPLVIDPSQIDELITLARKCLDQTAAAVLA.

Tyr156 contributes to the substrate binding site. Asp262 contacts pyridoxal 5'-phosphate. At Lys291 the chain carries N6-(pyridoxal phosphate)lysine. Substrate contacts are provided by Gly322 and Arg417.

This sequence belongs to the class-III pyridoxal-phosphate-dependent aminotransferase family. It depends on pyridoxal 5'-phosphate as a cofactor.

It carries out the reaction putrescine + pyruvate = 4-aminobutanal + L-alanine. Its pathway is amine and polyamine degradation; putrescine degradation; 4-aminobutanal from putrescine (transaminase route). Involved in the putrescine catabolism. Catalyzes the transfer of the amino group from putrescine to pyruvate to yield 4-aminobutanal and alanine. The protein is Putrescine--pyruvate aminotransferase of Pseudomonas aeruginosa (strain ATCC 15692 / DSM 22644 / CIP 104116 / JCM 14847 / LMG 12228 / 1C / PRS 101 / PAO1).